Reading from the N-terminus, the 267-residue chain is MKGSQLYRHLSLQGNRLHLHLFQGKKLQLHPSQGHKGTAHRTWKKGFATSAALPAGYDVRQVEITPLEQRKLTFDTHALVRELETHGFDKVQAETIVSALATLTNASIDTVYRDMVTRAQQEITVQQIMAHLDSIRKDMVILEKSEFATLRAENEKMKIELEHVRQHLLNETNRISADAKLDMNLERSRLTDLFTEQEKKLMEASTEFHKKNATTDSVITEINKKIDIDIASLKTLMESHKLDTVRYMAASVFTCLAIALGFYRLWK.

The transit peptide at 1–47 (MKGSQLYRHLSLQGNRLHLHLFQGKKLQLHPSQGHKGTAHRTWKKGF) directs the protein to the mitochondrion. Positions 142-175 (LEKSEFATLRAENEKMKIELEHVRQHLLNETNRI) form a coiled coil. Residues 244 to 266 (TVRYMAASVFTCLAIALGFYRLW) form a helical membrane-spanning segment.

The protein belongs to the CCDC90 family.

Its subcellular location is the mitochondrion membrane. This chain is Coiled-coil domain-containing protein 90B, mitochondrial (ccdc90b), found in Xenopus tropicalis (Western clawed frog).